Consider the following 476-residue polypeptide: Probable flippase AglR (476 aa).

The next 14 membrane-spanning stretches (helical) occupy residues 7-29 (ASAL…TIYV), 34-56 (GVGA…IPAV), 83-103 (VLTG…SPFV), 112-132 (TQLV…LGGL), 146-166 (ALWG…GVGV), 168-188 (ALFY…VYSL), 222-242 (WLDT…IYEV), 246-266 (ISAL…PTIS), 287-307 (VAGV…GDIL), 310-330 (YGPS…LSVV), 354-373 (FRIG…SLIP), 377-396 (VIGA…ILAV), 409-429 (VSAI…LFTI), and 439-459 (IEVV…LLSL).

It belongs to the AglR/Agl15 family.

The protein localises to the cell membrane. The protein operates within cell surface structure biogenesis; S-layer biogenesis. Involved in the assembly of a N-linked pentasaccharide that decorates the S-layer glycoprotein and flagellins. Probably mediates or contributes to the translocation of the dolichol-phosphate-mannose across the membrane. In Haloferax volcanii (strain ATCC 29605 / DSM 3757 / JCM 8879 / NBRC 14742 / NCIMB 2012 / VKM B-1768 / DS2) (Halobacterium volcanii), this protein is Probable flippase AglR (aglR).